The following is a 268-amino-acid chain: Fatty acid elongase sre1 (268 aa).

Transmembrane regions (helical) follow at residues 31 to 51 (VFPF…QAIM), 62 to 82 (FSII…SGVM), 110 to 130 (IGFW…DTVI), 137 to 157 (PIIF…WQWL), 161 to 181 (WLVG…LMYY), 198 to 218 (ITKA…YWFV), and 227 to 247 (APLS…ILFG).

It belongs to the ELO family.

The protein localises to the membrane. It carries out the reaction a very-long-chain acyl-CoA + malonyl-CoA + H(+) = a very-long-chain 3-oxoacyl-CoA + CO2 + CoA. Its function is as follows. Could be implicated in synthesis of very long chain fatty acids. This is Fatty acid elongase sre1 (sre1) from Dictyostelium discoideum (Social amoeba).